We begin with the raw amino-acid sequence, 87 residues long: HssA/B-like protein 54 (87 aa).

Belongs to the hssA/B family.

This is HssA/B-like protein 54 (hssl54) from Dictyostelium discoideum (Social amoeba).